A 976-amino-acid chain; its full sequence is Dolichyl-phosphooligosaccharide-protein glycotransferase 1 (976 aa).

Over 1-21 (MVKSKVKKVEKGKEGEEKRST) the chain is Cytoplasmic. A helical membrane pass occupies residues 22 to 42 (YVLLKKVLIPILVFGFAIYAF). Over 43–112 (YLRHLTAGKY…KVVSLFGYNE (70 aa)) the chain is Extracellular. A DXD motif 1 motif is present at residues 55-57 (DPD). Residue Asp57 coordinates Mn(2+). Residues 113 to 133 (LQAFLLWPPFVGFLGVIAVYL) form a helical membrane-spanning segment. Residues 134–135 (LG) are Cytoplasmic-facing. Residues 136–156 (RKVLNEWTGLWGAVVLTVSTA) traverse the membrane as a helical segment. At 157–165 (NFSRTFSGN) the chain is on the extracellular side. The chain crosses the membrane as a helical span at residues 166 to 186 (ARGDGPFMALFIFASVAMLYY). Arg167 and Asp169 together coordinate Mn(2+). The DXD motif 2 motif lies at 167-169 (RGD). The Cytoplasmic segment spans residues 187–193 (LKESNKT). A helical transmembrane segment spans residues 194–214 (RKIIYGTLFVLLTVISLGAWN). A topological domain (extracellular) is located at residue Gly215. Residues 216–236 (SPFGLMVLLGFASLQTIILFI) form a helical membrane-spanning segment. The Cytoplasmic portion of the chain corresponds to 237–247 (FGKLEELKKFV). A helical transmembrane segment spans residues 248–268 (KEFYPAYLAILAFGYALTFPG). Ile269 is a topological domain (extracellular). Residues 270–290 (VKIGGFIRFAFEVFLGLIFLL) traverse the membrane as a helical segment. Residues 291–306 (VIMLYGGRYLNYSDKK) lie on the Cytoplasmic side of the membrane. A helical transmembrane segment spans residues 307-327 (HRFLVVTIIVLLGFGGAYAYV). The Extracellular portion of the chain corresponds to 328 to 360 (GPKLFRLMGGAYQSTQVYETVQELAKTTIGDVK). The TIXE motif motif lies at 347 to 350 (TVQE). A helical membrane pass occupies residues 361-381 (AYYGVESGNGLIFFLSIPGLL). The Cytoplasmic segment spans residues 382 to 396 (ILLTKYLYDLFKKAK). A helical transmembrane segment spans residues 397–417 (SDNETLFALVFYTMSLYLLYL). Position 418 (Ala418) is a topological domain, extracellular. Residues 419–439 (VRFLFLASYAVALFFGIFIGF) traverse the membrane as a helical segment. Position 420 (Arg420) interacts with a glycophospholipid. Residues 440–453 (SMDVIEKMKENIGI) lie on the Cytoplasmic side of the membrane. A helical membrane pass occupies residues 454–474 (KAALGIVLSLMILVIPFVHAP). Residues 475–976 (VLARSARALK…SASAPHHSSE (502 aa)) are Extracellular-facing. The segment at 513-515 (WWD) is interacts with target acceptor peptide in protein substrate. The WWDYG motif signature appears at 513–517 (WWDYG). Tyr518 lines the a glycophospholipid pocket. The DK motif signature appears at 573–580 (DWAKFNAI).

This sequence belongs to the STT3 family. Mn(2+) is required as a cofactor. The cofactor is Mg(2+).

It is found in the cell membrane. The enzyme catalyses an archaeal dolichyl phosphooligosaccharide + [protein]-L-asparagine = an archaeal dolichyl phosphate + a glycoprotein with the oligosaccharide chain attached by N-beta-D-glycosyl linkage to a protein L-asparagine.. Its pathway is protein modification; protein glycosylation. Oligosaccharyl transferase (OST) that catalyzes the initial transfer of a defined glycan (ManNAcXyl(2)GlcAMan(2)GalNAc in Pyrococcus) from the lipid carrier dolichol-monophosphate to an asparagine residue within an Asn-X-Ser/Thr consensus motif in nascent polypeptide chains, the first step in protein N-glycosylation. The protein is Dolichyl-phosphooligosaccharide-protein glycotransferase 1 (aglB1) of Pyrococcus horikoshii (strain ATCC 700860 / DSM 12428 / JCM 9974 / NBRC 100139 / OT-3).